A 359-amino-acid chain; its full sequence is Glycerol-1-phosphate dehydrogenase [NAD(P)+] (359 aa).

Residues 107-111 (GRVID) and 129-132 (TAAS) each bind NAD(+). Asp134 is a substrate binding site. Ser138 provides a ligand contact to NAD(+). Asp181 contributes to the substrate binding site. Residues Asp181 and His261 each contribute to the Zn(2+) site. His265 lines the substrate pocket. His277 provides a ligand contact to Zn(2+).

Belongs to the glycerol-1-phosphate dehydrogenase family. Zn(2+) serves as cofactor.

It localises to the cytoplasm. The catalysed reaction is sn-glycerol 1-phosphate + NAD(+) = dihydroxyacetone phosphate + NADH + H(+). It carries out the reaction sn-glycerol 1-phosphate + NADP(+) = dihydroxyacetone phosphate + NADPH + H(+). It participates in membrane lipid metabolism; glycerophospholipid metabolism. Its function is as follows. Catalyzes the NAD(P)H-dependent reduction of dihydroxyacetonephosphate (DHAP or glycerone phosphate) to glycerol 1-phosphate (G1P). The G1P thus generated is used as the glycerophosphate backbone of phospholipids in the cellular membranes of Archaea. This Methanospirillum hungatei JF-1 (strain ATCC 27890 / DSM 864 / NBRC 100397 / JF-1) protein is Glycerol-1-phosphate dehydrogenase [NAD(P)+].